A 501-amino-acid chain; its full sequence is Aldehyde dehydrogenase 1A1 (501 aa).

S2 carries the N-acetylserine modification. N6-acetyllysine occurs at positions 91 and 128. NAD(+) is bound by residues 167–170, 193–196, 226–227, and 246–247; these read IPWN, KPAE, GP, and GS. K252 carries the post-translational modification N6-acetyllysine. The active-site Proton acceptor is E269. 269–271 is an NAD(+) binding site; that stretch reads ELG. The Nucleophile role is filled by C303. The mediates interaction with PRMT3 stretch occupies residues 336 to 501; that stretch reads LTQGINQGPQ…VAMKISQKNS (166 aa). Residue T337 is modified to Phosphothreonine. An NAD(+)-binding site is contributed by 349-353; it reads EQHDK. N6-acetyllysine is present on residues K353 and K367. 400-402 is a binding site for NAD(+); it reads EIF. An N6-acetyllysine modification is found at K410. S413 is subject to Phosphoserine. 3 positions are modified to N6-acetyllysine: K419, K435, and K495.

The protein belongs to the aldehyde dehydrogenase family. As to quaternary structure, homotetramer. Interacts with PRMT3; the interaction is direct, inhibits ALDH1A1 aldehyde dehydrogenase activity and is independent of the methyltransferase activity of PRMT3. The N-terminus is blocked most probably by acetylation. Strongly expressed in kidney, lung, testis, intestine, stomach, and trachea, but weakly in the liver.

The protein resides in the cytoplasm. It localises to the cytosol. The protein localises to the cell projection. Its subcellular location is the axon. It carries out the reaction an aldehyde + NAD(+) + H2O = a carboxylate + NADH + 2 H(+). The enzyme catalyses all-trans-retinal + NAD(+) + H2O = all-trans-retinoate + NADH + 2 H(+). The catalysed reaction is 9-cis-retinal + NAD(+) + H2O = 9-cis-retinoate + NADH + 2 H(+). It catalyses the reaction 11-cis-retinal + NAD(+) + H2O = 11-cis-retinoate + NADH + 2 H(+). It carries out the reaction 13-cis-retinal + NAD(+) + H2O = 13-cis-retinoate + NADH + 2 H(+). The enzyme catalyses 3-deoxyglucosone + NAD(+) + H2O = 2-dehydro-3-deoxy-D-gluconate + NADH + 2 H(+). The catalysed reaction is (E)-4-hydroxynon-2-enal + NAD(+) + H2O = (E)-4-hydroxynon-2-enoate + NADH + 2 H(+). It catalyses the reaction malonaldehyde + NAD(+) + H2O = 3-oxopropanoate + NADH + 2 H(+). It carries out the reaction hexanal + NAD(+) + H2O = hexanoate + NADH + 2 H(+). The enzyme catalyses propanal + NAD(+) + H2O = propanoate + NADH + 2 H(+). The catalysed reaction is acetaldehyde + NAD(+) + H2O = acetate + NADH + 2 H(+). It catalyses the reaction benzaldehyde + NAD(+) + H2O = benzoate + NADH + 2 H(+). It carries out the reaction 4-aminobutanal + NAD(+) + H2O = 4-aminobutanoate + NADH + 2 H(+). It participates in cofactor metabolism; retinol metabolism. Its activity is regulated as follows. Inhibited by chloral hydrate. Functionally, cytosolic dehydrogenase that catalyzes the irreversible oxidation of a wide range of aldehydes to their corresponding carboxylic acid. Functions downstream of retinol dehydrogenases and catalyzes the oxidation of retinaldehyde into retinoic acid, the second step in the oxidation of retinol/vitamin A into retinoic acid. This pathway is crucial to control the levels of retinol and retinoic acid, two important molecules which excess can be teratogenic and cytotoxic. Also oxidizes aldehydes resulting from lipid peroxidation like (E)-4-hydroxynon-2-enal/HNE, malonaldehyde and hexanal that form protein adducts and are highly cytotoxic. By participating for instance to the clearance of (E)-4-hydroxynon-2-enal/HNE in the lens epithelium prevents the formation of HNE-protein adducts and lens opacification. Functions also downstream of fructosamine-3-kinase in the fructosamine degradation pathway by catalyzing the oxidation of 3-deoxyglucosone, the carbohydrate product of fructosamine 3-phosphate decomposition, which is itself a potent glycating agent that may react with lysine and arginine side-chains of proteins. Also has an aminobutyraldehyde dehydrogenase activity and is probably part of an alternative pathway for the biosynthesis of GABA/4-aminobutanoate in midbrain, thereby playing a role in GABAergic synaptic transmission. The polypeptide is Aldehyde dehydrogenase 1A1 (Rattus norvegicus (Rat)).